Consider the following 450-residue polypeptide: UDP-N-acetylmuramoylalanine--D-glutamate ligase (450 aa).

ATP is bound at residue 119-125 (GSNGKTT).

The protein belongs to the MurCDEF family.

The protein resides in the cytoplasm. The catalysed reaction is UDP-N-acetyl-alpha-D-muramoyl-L-alanine + D-glutamate + ATP = UDP-N-acetyl-alpha-D-muramoyl-L-alanyl-D-glutamate + ADP + phosphate + H(+). It participates in cell wall biogenesis; peptidoglycan biosynthesis. In terms of biological role, cell wall formation. Catalyzes the addition of glutamate to the nucleotide precursor UDP-N-acetylmuramoyl-L-alanine (UMA). The sequence is that of UDP-N-acetylmuramoylalanine--D-glutamate ligase from Bacillus cereus (strain ATCC 10987 / NRS 248).